The following is a 187-amino-acid chain: Pumilio homolog 26 (187 aa).

The stretch at 20 to 42 (VATEFLRVSNDVAELHKLSSKLT) is one Pumilio 1; degenerate repeat. A Pumilio 2; degenerate repeat occupies 43-78 (SDPYLFVEFVKTIRGFLSVQTALGLSGEIDTVFLQV). A Pumilio 3; degenerate repeat occupies 79 to 116 (IKGWFPDLITETFSFLIVVRIINLFNKRANSKVYPDIL). The stretch at 117–154 (RRIGNNALYLTRNPLRGICLVEKAINVRDPDCTVFIAL) is one Pumilio 4; degenerate repeat. The stretch at 155–187 (KLHSHYVELSFEELGSNIVEKLLSVGESGICGV) is one Pumilio 5 repeat.

The protein localises to the cytoplasm. In terms of biological role, sequence-specific RNA-binding protein that regulates translation and mRNA stability by binding the 3'-UTR of target mRNAs. In Arabidopsis thaliana (Mouse-ear cress), this protein is Pumilio homolog 26 (APUM26).